The chain runs to 569 residues: MLO-like protein 10 (569 aa).

Over 1–41 (MATRCFWCWTTLLFCSQLLTGFARASSAGGAKEKGLSQTPT) the chain is Extracellular. A helical membrane pass occupies residues 42–62 (WAVALVCTFFILVSVLLEKAL). Residues 63-85 (HRVATWLWEKHKNSLLEALEKIK) are Cytoplasmic-facing. The chain crosses the membrane as a helical span at residues 86-106 (AELMILGFISLLLTFGEQYIL). The Extracellular portion of the chain corresponds to 107–163 (KICIPEKAAASMLPCPAPSTHDQDKTHRRRLAAATTSSRCDEGHEPLIPATGLHQLH). A helical transmembrane segment spans residues 164 to 184 (ILLFFMAAFHILYSFITMMLG). The Cytoplasmic segment spans residues 185 to 286 (RLKIRGWKKW…IKRSLEDDFK (102 aa)). A helical transmembrane segment spans residues 287–307 (VVVGISPLLWASFVIFLLLNV). A topological domain (extracellular) is located at residue N308. The helical transmembrane segment at 309 to 329 (GWEALFWASILPVLIILAVST) threads the bilayer. Over 330 to 372 (KLQAILTRMALGITERHAVVQGIPLVHGSDKYFWFNRPQLLLH) the chain is Cytoplasmic. A helical membrane pass occupies residues 373 to 393 (LLHFALFQNAFQLTYFFWVWY). Residues 394-413 (SFGLKSCFHTDFKLVIVKLS) are Extracellular-facing. The chain crosses the membrane as a helical span at residues 414–434 (LGVGALILCSYITLPLYALVT). Residues 435-569 (QMGSNMKKAV…VKNVPANDID (135 aa)) are Cytoplasmic-facing. The interval 447–468 (EQMAKALKKWHMTVKKKKGKAR) is calmodulin-binding.

The protein belongs to the MLO family.

It localises to the membrane. May be involved in modulation of pathogen defense and leaf cell death. Activity seems to be regulated by Ca(2+)-dependent calmodulin binding and seems not to require heterotrimeric G proteins. This chain is MLO-like protein 10 (MLO10), found in Arabidopsis thaliana (Mouse-ear cress).